An 873-amino-acid polypeptide reads, in one-letter code: Bifunctional levopimaradiene synthase, chloroplastic (873 aa).

The N-terminal 59 residues, 1-59 (MAGVLFANLPCSLQLSPKVPFRQSTNILIPFHKRSSFGFNAQHCVRSHLRLRWNCVGIH), are a transit peptide targeting the chloroplast. K271 provides a ligand contact to substrate. Mg(2+) contacts are provided by D405 and D407. The short motif at 405–408 (DVDD) is the DXDD motif element. Residue K492 coordinates substrate. Residues D624, D628, N769, T773, and E777 each contribute to the Mg(2+) site. A DDXXD motif motif is present at residues 624 to 628 (DDLYD).

Belongs to the terpene synthase family. Tpsd subfamily. Mg(2+) is required as a cofactor. As to expression, expressed in roots.

Its subcellular location is the plastid. It localises to the chloroplast. It carries out the reaction (2E,6E,10E)-geranylgeranyl diphosphate = (+)-copalyl diphosphate. It catalyses the reaction (+)-copalyl diphosphate = abieta-8(14),12-diene + diphosphate. Its pathway is terpene metabolism; ginkgolide biosynthesis. Functionally, catalyzes the initial cyclization step in the biosynthesis of ginkgolides, a structurally unique family of diterpenoids that are highly specific platelet-activating-factor receptor antagonists. Bifunctional enzyme that catalyzes two sequential cyclizations of geranylgeranyl diphosphate (GGPP) to levopimaradiene. This Ginkgo biloba (Ginkgo) protein is Bifunctional levopimaradiene synthase, chloroplastic (LPS).